We begin with the raw amino-acid sequence, 74 residues long: Protein translocase subunit SecE (74 aa).

The Cytoplasmic segment spans residues 1 to 36; the sequence is MKTDFNQKIEQLKEFIEECRRVWLVLKKPTKDEYLA. A helical transmembrane segment spans residues 37–62; sequence VAKVTALGISLLGIIGYIIHVPATYI. Topologically, residues 63-74 are extracellular; the sequence is KGILKPPTTPRV.

The protein belongs to the SecE/SEC61-gamma family. As to quaternary structure, component of the Sec protein translocase complex. Heterotrimer consisting of alpha (SecY), beta (SecG) and gamma (SecE) subunits. The heterotrimers can form oligomers, although 1 heterotrimer is thought to be able to translocate proteins. Interacts with the ribosome. May interact with SecDF, and other proteins may be involved.

The protein localises to the cell membrane. In terms of biological role, essential subunit of the protein translocation channel SecYEG. Clamps together the 2 halves of SecY. May contact the channel plug during translocation. The polypeptide is Protein translocase subunit SecE (Methanocaldococcus jannaschii (strain ATCC 43067 / DSM 2661 / JAL-1 / JCM 10045 / NBRC 100440) (Methanococcus jannaschii)).